The sequence spans 130 residues: Glycoprotein hormone alpha-2 (130 aa).

An N-terminal signal peptide occupies residues M1–G22. Cystine bridges form between C32/C90, C49/C104, C58/C120, and C62/C122. 2 N-linked (GlcNAc...) asparagine glycosylation sites follow: N38 and N82.

Belongs to the glycoprotein hormones subunit alpha family. As to quaternary structure, heterodimer with GPHB5; this heterodimer interacts with thyroid-stimulating hormone receptor (TSHR), and hence stimulates cAMP production.

The protein resides in the secreted. In terms of biological role, functions as a heterodimeric glycoprotein hormone with GPHB5 able to bind and activate the thyroid-stimulating hormone receptor (TSHR), leading to increased cAMP production. Plays a central role in controlling thyroid cell metabolism. This is Glycoprotein hormone alpha-2 (Gpha2) from Rattus norvegicus (Rat).